Consider the following 179-residue polypeptide: Crossover junction endodeoxyribonuclease RuvC (179 aa).

Residues Asp-7, Glu-67, and Asp-140 contribute to the active site. Asp-7, Glu-67, and Asp-140 together coordinate Mg(2+).

Belongs to the RuvC family. As to quaternary structure, homodimer which binds Holliday junction (HJ) DNA. The HJ becomes 2-fold symmetrical on binding to RuvC with unstacked arms; it has a different conformation from HJ DNA in complex with RuvA. In the full resolvosome a probable DNA-RuvA(4)-RuvB(12)-RuvC(2) complex forms which resolves the HJ. It depends on Mg(2+) as a cofactor.

The protein localises to the cytoplasm. It carries out the reaction Endonucleolytic cleavage at a junction such as a reciprocal single-stranded crossover between two homologous DNA duplexes (Holliday junction).. Functionally, the RuvA-RuvB-RuvC complex processes Holliday junction (HJ) DNA during genetic recombination and DNA repair. Endonuclease that resolves HJ intermediates. Cleaves cruciform DNA by making single-stranded nicks across the HJ at symmetrical positions within the homologous arms, yielding a 5'-phosphate and a 3'-hydroxyl group; requires a central core of homology in the junction. The consensus cleavage sequence is 5'-(A/T)TT(C/G)-3'. Cleavage occurs on the 3'-side of the TT dinucleotide at the point of strand exchange. HJ branch migration catalyzed by RuvA-RuvB allows RuvC to scan DNA until it finds its consensus sequence, where it cleaves and resolves the cruciform DNA. In Salinibacter ruber (strain DSM 13855 / M31), this protein is Crossover junction endodeoxyribonuclease RuvC.